The primary structure comprises 804 residues: MSADSENETSESSPAGEATASTSALPDEPLILLPVRNAVLFPGMVLPFTAGRGQVKEDVQAAVKRQQPLGVVLQRDPRVQDPTFDDLNTIGTVANVVRYVTSPEDGAHHLICQGVERFRLIAPVEGLGFRAARVEFLPETTARNPAVDARALVLRQRAGEMIGLLPNAGGELVRALDAIELPGLLADTIAGLLDIPPERKQEILETLDVCKRLDKVLDAVAGRIEVLRLSQEIGEQTRGRIDQRQREMMLREQLRTIQNELGENIESREEVRKLTEAIEAAHMPPEVESHARKELGRLERMPEASSEYSISVSYLEWLTELPWPLPAEAPIDIARARQILDEAHFGLDKVKRRILEYLGVRKLNPHGKAPILCFLGPPGVGKTSLGQSIARALERPFVRVSLGGVHDEAEIRGHRRTYIGAMPGNIIQAIRKAGARNCVMLLDELDKLGQGVHGDPAAAMLEVLDPEQNASFRDNYLGVPFDLSAIVFVATANQIEGIAGPLRDRMEILDLPGYTEAEKFQIAQRFLVPRQLEACGLTAAQCELPDETLRAIIRDYTREAGVRSLERQIGAVFRYVALRVAEDPSTHERIEPDRLSSILGHRRFESEVAMRTSLPGVVTGLAWTPVGGDLLFIEASSTPGGGRLVLTGQLGDVMKESVQAALTLVKSRCESLHIDCSNFDKRDIHVHVPAGAVPKDGPSAGVAMFIAIASLLMGRAVRSDCAVTGEISLRGIVLPVGGIKEKVLAALRGGIKTVLLPARNAPDLEDIPVDARNQMRFVLLETVDDAVREIIEDESVTSSRNVDI.

The interval 1 to 23 is disordered; that stretch reads MSADSENETSESSPAGEATASTS. In terms of domain architecture, Lon N-terminal spans 30–224; the sequence is LILLPVRNAV…KVLDAVAGRI (195 aa). Residue 376–383 participates in ATP binding; it reads GPPGVGKT. The Lon proteolytic domain occupies 612-793; sequence TSLPGVVTGL…DDAVREIIED (182 aa). Catalysis depends on residues serine 699 and lysine 742.

The protein belongs to the peptidase S16 family. In terms of assembly, homohexamer. Organized in a ring with a central cavity.

The protein localises to the cytoplasm. It carries out the reaction Hydrolysis of proteins in presence of ATP.. In terms of biological role, ATP-dependent serine protease that mediates the selective degradation of mutant and abnormal proteins as well as certain short-lived regulatory proteins. Required for cellular homeostasis and for survival from DNA damage and developmental changes induced by stress. Degrades polypeptides processively to yield small peptide fragments that are 5 to 10 amino acids long. Binds to DNA in a double-stranded, site-specific manner. In Paraburkholderia phytofirmans (strain DSM 17436 / LMG 22146 / PsJN) (Burkholderia phytofirmans), this protein is Lon protease.